Here is a 288-residue protein sequence, read N- to C-terminus: Elongation factor Ts (288 aa).

The interval 82-85 is involved in Mg(2+) ion dislocation from EF-Tu; that stretch reads TDFV.

Belongs to the EF-Ts family.

Its subcellular location is the cytoplasm. Functionally, associates with the EF-Tu.GDP complex and induces the exchange of GDP to GTP. It remains bound to the aminoacyl-tRNA.EF-Tu.GTP complex up to the GTP hydrolysis stage on the ribosome. The protein is Elongation factor Ts of Chlorobaculum parvum (strain DSM 263 / NCIMB 8327) (Chlorobium vibrioforme subsp. thiosulfatophilum).